Consider the following 210-residue polypeptide: Proteasome subunit beta 2 (210 aa).

Residues 1-12 (MSNNVEEKILHG) constitute a propeptide, removed in mature form; by autocatalysis. Catalysis depends on Thr13, which acts as the Nucleophile.

Belongs to the peptidase T1B family. The 20S proteasome core is composed of 14 alpha and 14 beta subunits that assemble into four stacked heptameric rings, resulting in a barrel-shaped structure. The two inner rings, each composed of seven catalytic beta subunits, are sandwiched by two outer rings, each composed of seven alpha subunits. The catalytic chamber with the active sites is on the inside of the barrel. Has a gated structure, the ends of the cylinder being occluded by the N-termini of the alpha-subunits. Is capped at one or both ends by the proteasome regulatory ATPase, PAN.

It localises to the cytoplasm. It carries out the reaction Cleavage of peptide bonds with very broad specificity.. The formation of the proteasomal ATPase PAN-20S proteasome complex, via the docking of the C-termini of PAN into the intersubunit pockets in the alpha-rings, triggers opening of the gate for substrate entry. Interconversion between the open-gate and close-gate conformations leads to a dynamic regulation of the 20S proteasome proteolysis activity. Its function is as follows. Component of the proteasome core, a large protease complex with broad specificity involved in protein degradation. This chain is Proteasome subunit beta 2, found in Cenarchaeum symbiosum (strain A).